The sequence spans 133 residues: Fluoride-specific ion channel FluC (133 aa).

A run of 4 helical transmembrane segments spans residues 12–32 (LAMT…ASLI), 41–61 (WGTL…LVWL), 76–96 (IVGV…CLVF), and 104–124 (MIGI…VAGA). Na(+) contacts are provided by glycine 81 and threonine 84.

Belongs to the fluoride channel Fluc/FEX (TC 1.A.43) family.

It localises to the cell inner membrane. The catalysed reaction is fluoride(in) = fluoride(out). Its activity is regulated as follows. Na(+) is not transported, but it plays an essential structural role and its presence is essential for fluoride channel function. Its function is as follows. Fluoride-specific ion channel. Important for reducing fluoride concentration in the cell, thus reducing its toxicity. This is Fluoride-specific ion channel FluC from Xanthomonas euvesicatoria pv. vesicatoria (strain 85-10) (Xanthomonas campestris pv. vesicatoria).